A 251-amino-acid chain; its full sequence is Hydroxyacylglutathione hydrolase (251 aa).

Zn(2+) is bound by residues His53, His55, Asp57, His58, His109, Asp126, and His164.

It belongs to the metallo-beta-lactamase superfamily. Glyoxalase II family. As to quaternary structure, monomer. Zn(2+) serves as cofactor.

The enzyme catalyses an S-(2-hydroxyacyl)glutathione + H2O = a 2-hydroxy carboxylate + glutathione + H(+). Its pathway is secondary metabolite metabolism; methylglyoxal degradation; (R)-lactate from methylglyoxal: step 2/2. Functionally, thiolesterase that catalyzes the hydrolysis of S-D-lactoyl-glutathione to form glutathione and D-lactic acid. In Wigglesworthia glossinidia brevipalpis, this protein is Hydroxyacylglutathione hydrolase.